Here is a 162-residue protein sequence, read N- to C-terminus: Protein NrdI (162 aa).

This sequence belongs to the NrdI family.

Probably involved in ribonucleotide reductase function. This Streptococcus pyogenes serotype M3 (strain ATCC BAA-595 / MGAS315) protein is Protein NrdI.